A 94-amino-acid chain; its full sequence is Co-chaperonin GroES (94 aa).

It belongs to the GroES chaperonin family. As to quaternary structure, heptamer of 7 subunits arranged in a ring. Interacts with the chaperonin GroEL.

Its subcellular location is the cytoplasm. Its function is as follows. Together with the chaperonin GroEL, plays an essential role in assisting protein folding. The GroEL-GroES system forms a nano-cage that allows encapsulation of the non-native substrate proteins and provides a physical environment optimized to promote and accelerate protein folding. GroES binds to the apical surface of the GroEL ring, thereby capping the opening of the GroEL channel. The chain is Co-chaperonin GroES from Streptococcus mitis.